Here is a 110-residue protein sequence, read N- to C-terminus: MNETIQVKIITPSSIAFEKQSKMVTMPGEDGMFGVLPNHVPMIVNLTAGLVQVYINNMHNSENTYLISGGVTEITSNYINIVTEAAINVTNLSESEISTQCYELQKLSSH.

Belongs to the ATPase epsilon chain family. F-type ATPases have 2 components, CF(1) - the catalytic core - and CF(0) - the membrane proton channel. CF(1) has five subunits: alpha(3), beta(3), gamma(1), delta(1), epsilon(1). CF(0) has three main subunits: a, b and c.

The protein localises to the cell inner membrane. Functionally, produces ATP from ADP in the presence of a proton gradient across the membrane. This is ATP synthase epsilon chain from Rickettsia typhi (strain ATCC VR-144 / Wilmington).